A 274-amino-acid polypeptide reads, in one-letter code: Urease accessory protein UreD 2 (274 aa).

It belongs to the UreD family. UreD, UreF and UreG form a complex that acts as a GTP-hydrolysis-dependent molecular chaperone, activating the urease apoprotein by helping to assemble the nickel containing metallocenter of UreC. The UreE protein probably delivers the nickel.

It is found in the cytoplasm. Required for maturation of urease via the functional incorporation of the urease nickel metallocenter. The chain is Urease accessory protein UreD 2 from Brucella anthropi (strain ATCC 49188 / DSM 6882 / CCUG 24695 / JCM 21032 / LMG 3331 / NBRC 15819 / NCTC 12168 / Alc 37) (Ochrobactrum anthropi).